A 287-amino-acid polypeptide reads, in one-letter code: Glycine--tRNA ligase alpha subunit (287 aa).

It belongs to the class-II aminoacyl-tRNA synthetase family. As to quaternary structure, tetramer of two alpha and two beta subunits.

Its subcellular location is the cytoplasm. The enzyme catalyses tRNA(Gly) + glycine + ATP = glycyl-tRNA(Gly) + AMP + diphosphate. This is Glycine--tRNA ligase alpha subunit from Campylobacter curvus (strain 525.92).